The primary structure comprises 130 residues: Large-conductance mechanosensitive channel (130 aa).

At 1 to 14 the chain is on the cytoplasmic side; that stretch reads MWNEFKAFAMRGNI. Residues 15-43 traverse the membrane as a helical segment; the sequence is VDLAIGVVIGGAFGKIVTSLVNDIIMPLV. Residues 44–65 lie on the Extracellular side of the membrane; it reads GLLLGGLDFSGLSFTFGDAVVK. Residues 66 to 85 traverse the membrane as a helical segment; sequence YGSFIQTIVNFLIISFSIFI. Topologically, residues 86 to 130 are cytoplasmic; the sequence is VIRTLNGLRRKKEAEEEAAEEAVDAQEELLKEIRDLLKQQAKSPE.

Belongs to the MscL family. As to quaternary structure, homopentamer.

Its subcellular location is the cell membrane. Its function is as follows. Channel that opens in response to stretch forces in the membrane lipid bilayer. Forms a nonselective ion channel with a conductance of about 4 nanosiemens. May participate in the regulation of osmotic pressure changes within the cell. This chain is Large-conductance mechanosensitive channel, found in Bacillus subtilis (strain 168).